Reading from the N-terminus, the 622-residue chain is tRNA uridine 5-carboxymethylaminomethyl modification enzyme MnmG (622 aa).

10 to 15 (GGGHAG) provides a ligand contact to FAD. 269-283 (GPRYCPSVEDKIVKF) is an NAD(+) binding site.

It belongs to the MnmG family. As to quaternary structure, homodimer. Heterotetramer of two MnmE and two MnmG subunits. The cofactor is FAD.

The protein localises to the cytoplasm. NAD-binding protein involved in the addition of a carboxymethylaminomethyl (cmnm) group at the wobble position (U34) of certain tRNAs, forming tRNA-cmnm(5)s(2)U34. In Bartonella quintana (strain Toulouse) (Rochalimaea quintana), this protein is tRNA uridine 5-carboxymethylaminomethyl modification enzyme MnmG.